A 222-amino-acid chain; its full sequence is Putative metal transport protein MJ1569 (222 aa).

Helical transmembrane passes span 3–23 (IPDG…MIPI), 39–59 (LPLL…NLPV), 81–101 (WVAT…FGDG), 102–122 (GITC…FVGY), 135–155 (VIAS…VAGF), and 180–200 (AFAH…IVVW).

This sequence belongs to the CbiM family.

It is found in the cell membrane. May be involved in metal transport. In Methanocaldococcus jannaschii (strain ATCC 43067 / DSM 2661 / JAL-1 / JCM 10045 / NBRC 100440) (Methanococcus jannaschii), this protein is Putative metal transport protein MJ1569.